The following is a 190-amino-acid chain: Holliday junction branch migration complex subunit RuvA (190 aa).

Residues 1–63 (MIRKINATIE…EWNTSLYIFK (63 aa)) form a domain I region. Residues 64–138 (DKIERDVFES…NSFSAYSTGA (75 aa)) are domain II. Positions 138–142 (ADTQS) are flexible linker. The segment at 143-190 (YGNNNLKEAIEALETLGFQRYEIMKVIGQLDLEDLKTEEIIKECLTRL) is domain III.

This sequence belongs to the RuvA family. Homotetramer. Forms an RuvA(8)-RuvB(12)-Holliday junction (HJ) complex. HJ DNA is sandwiched between 2 RuvA tetramers; dsDNA enters through RuvA and exits via RuvB. An RuvB hexamer assembles on each DNA strand where it exits the tetramer. Each RuvB hexamer is contacted by two RuvA subunits (via domain III) on 2 adjacent RuvB subunits; this complex drives branch migration. In the full resolvosome a probable DNA-RuvA(4)-RuvB(12)-RuvC(2) complex forms which resolves the HJ.

It is found in the cytoplasm. Functionally, the RuvA-RuvB-RuvC complex processes Holliday junction (HJ) DNA during genetic recombination and DNA repair, while the RuvA-RuvB complex plays an important role in the rescue of blocked DNA replication forks via replication fork reversal (RFR). RuvA specifically binds to HJ cruciform DNA, conferring on it an open structure. The RuvB hexamer acts as an ATP-dependent pump, pulling dsDNA into and through the RuvAB complex. HJ branch migration allows RuvC to scan DNA until it finds its consensus sequence, where it cleaves and resolves the cruciform DNA. In Petrotoga mobilis (strain DSM 10674 / SJ95), this protein is Holliday junction branch migration complex subunit RuvA.